We begin with the raw amino-acid sequence, 59 residues long: Large ribosomal subunit protein bL32 (59 aa).

This sequence belongs to the bacterial ribosomal protein bL32 family.

The chain is Large ribosomal subunit protein bL32 from Mesoplasma florum (strain ATCC 33453 / NBRC 100688 / NCTC 11704 / L1) (Acholeplasma florum).